We begin with the raw amino-acid sequence, 232 residues long: Ribosomal RNA small subunit methyltransferase G (232 aa).

The tract at residues 1 to 24 (MVDTALHPIPGRRTPPHPRSTLPL) is disordered. Residues G91, L96, 142-143 (AE), and R160 each bind S-adenosyl-L-methionine.

It belongs to the methyltransferase superfamily. RNA methyltransferase RsmG family.

Its subcellular location is the cytoplasm. Its function is as follows. Specifically methylates the N7 position of guanine in position 518 of 16S rRNA. This Corynebacterium efficiens (strain DSM 44549 / YS-314 / AJ 12310 / JCM 11189 / NBRC 100395) protein is Ribosomal RNA small subunit methyltransferase G.